We begin with the raw amino-acid sequence, 128 residues long: Ribosome-binding factor A (128 aa).

Belongs to the RbfA family. In terms of assembly, monomer. Binds 30S ribosomal subunits, but not 50S ribosomal subunits or 70S ribosomes.

The protein localises to the cytoplasm. In terms of biological role, one of several proteins that assist in the late maturation steps of the functional core of the 30S ribosomal subunit. Associates with free 30S ribosomal subunits (but not with 30S subunits that are part of 70S ribosomes or polysomes). Required for efficient processing of 16S rRNA. May interact with the 5'-terminal helix region of 16S rRNA. The sequence is that of Ribosome-binding factor A from Pseudomonas paraeruginosa (strain DSM 24068 / PA7) (Pseudomonas aeruginosa (strain PA7)).